Here is a 1257-residue protein sequence, read N- to C-terminus: RAF-like serine/threonine-protein kinase 24 (1257 aa).

The segment at 1 to 21 (MDQAKGYEHVRYTAPDPRDEG) is disordered. In terms of domain architecture, PB1 spans 191–277 (PRDQKLRYVG…EKPRMFLFSS (87 aa)). Composition is skewed to basic and acidic residues over residues 457–480 (VQDP…KVND) and 493–502 (KEPKMRRESS). Disordered stretches follow at residues 457–629 (VQDP…RTSQ) and 761–789 (SQSE…VPQG). The residue at position 474 (S474) is a Phosphoserine. A compositionally biased stretch (low complexity) spans 533–548 (TQTSSSTPDPSSSTLS). The span at 550 to 576 (KSLRKSEDHVENNLSAKEPKMRKEHST) shows a compositional bias: basic and acidic residues. Phosphoserine is present on S555. Over residues 583–593 (SVSSVSSDSMV) the composition is skewed to low complexity. The span at 769-782 (ETNTPEHVSQTETS) shows a compositional bias: polar residues. Position 777 is a phosphoserine (S777). The 266-residue stretch at 974–1239 (LEELKELGSG…PEIARRLRTM (266 aa)) folds into the Protein kinase domain. ATP contacts are provided by residues 980–988 (LGSGTFGTV) and K1001. S1013 bears the Phosphoserine mark. Catalysis depends on D1102, which acts as the Proton acceptor.

It belongs to the protein kinase superfamily. Ser/Thr protein kinase family. Post-translationally, hyperphosphorylated in response to auxin in an ABP1- and TMK1-dependent manner.

It localises to the cytoplasm. The enzyme catalyses L-seryl-[protein] + ATP = O-phospho-L-seryl-[protein] + ADP + H(+). It catalyses the reaction L-threonyl-[protein] + ATP = O-phospho-L-threonyl-[protein] + ADP + H(+). Activated by auxin via rapid phosphorylation downstream of ABP1 and TMK1 signaling. Its function is as follows. RAF-like protein kinase acting, together with RAF20, as a central mediator of a fast response pathway to auxin involving proteins phosphorylation, and leading to rapid cellular responses including membrane depolarization and cytoplasmic streaming. Required for general growth and developmental process. The protein is RAF-like serine/threonine-protein kinase 24 of Arabidopsis thaliana (Mouse-ear cress).